Here is a 655-residue protein sequence, read N- to C-terminus: D-xylonate dehydratase YjhG (655 aa).

This sequence belongs to the IlvD/Edd family.

The enzyme catalyses D-xylonate = 2-dehydro-3-deoxy-D-arabinonate + H2O. Activity is increased in the presence of Mn(+) and Mg(2+). Inhibited by thiol compounds. Catalyzes the dehydration of D-xylonic acid to form 2-dehydro-3-deoxy-D-pentonate. The chain is D-xylonate dehydratase YjhG (yjhG) from Escherichia coli (strain K12).